The primary structure comprises 230 residues: Rab15 effector protein (230 aa).

Glycine 2 carries the N-myristoyl glycine lipid modification.

In terms of assembly, interacts with the GTP-bound form of RAB15, RAB3A-D and RAB34.

Its subcellular location is the early endosome membrane. Functionally, effector that interacts with Rab GTPases in their active form (GTP-bound) including RAB15, RAB3A-D and RAB34. Controls downstream signaling such as cell proliferation and cell migration. Also regulates transferrin receptor recycling from the endocytic recycling compartment. This chain is Rab15 effector protein, found in Mus musculus (Mouse).